A 387-amino-acid polypeptide reads, in one-letter code: tRNA N6-adenosine threonylcarbamoyltransferase (387 aa).

Fe cation-binding residues include His112 and His116. Substrate-binding positions include 134 to 138, Asp167, Gly180, and Asn325; that span reads LASGG. Asp353 serves as a coordination point for Fe cation.

Belongs to the KAE1 / TsaD family. It depends on Fe(2+) as a cofactor.

Its subcellular location is the cytoplasm. It carries out the reaction L-threonylcarbamoyladenylate + adenosine(37) in tRNA = N(6)-L-threonylcarbamoyladenosine(37) in tRNA + AMP + H(+). In terms of biological role, required for the formation of a threonylcarbamoyl group on adenosine at position 37 (t(6)A37) in tRNAs that read codons beginning with adenine. Is involved in the transfer of the threonylcarbamoyl moiety of threonylcarbamoyl-AMP (TC-AMP) to the N6 group of A37, together with TsaE and TsaB. TsaD likely plays a direct catalytic role in this reaction. This chain is tRNA N6-adenosine threonylcarbamoyltransferase, found in Rickettsia prowazekii (strain Madrid E).